We begin with the raw amino-acid sequence, 434 residues long: Zinc finger and BTB domain-containing protein 8A (434 aa).

Positions 24-92 (CDCSILVEGK…VYSGKLSLTG (69 aa)) constitute a BTB domain. The tract at residues 134–238 (SLSDKDTGSN…SGNHVSQSEE (105 aa)) is disordered. A phosphoserine mark is found at serine 161 and serine 167. Glycyl lysine isopeptide (Lys-Gly) (interchain with G-Cter in SUMO2) cross-links involve residues lysine 172, lysine 176, and lysine 193. Basic and acidic residues predominate over residues 192–202 (AKHEQRKEPSK). Residues 226 to 238 (QTDSGNHVSQSEE) show a composition bias toward polar residues. 2 consecutive C2H2-type zinc fingers follow at residues 275-297 (FKCP…LRCH) and 303-326 (YPCQ…RTIH). Residue lysine 430 forms a Glycyl lysine isopeptide (Lys-Gly) (interchain with G-Cter in SUMO2) linkage.

It localises to the nucleus. Its function is as follows. May be involved in transcriptional regulation. The chain is Zinc finger and BTB domain-containing protein 8A (Zbtb8a) from Mus musculus (Mouse).